Consider the following 287-residue polypeptide: 4-hydroxybenzoate octaprenyltransferase (287 aa).

9 helical membrane passes run 21–41, 44–64, 91–111, 112–132, 139–159, 160–180, 211–231, 235–255, and 263–283; these read VGIF…AKGA, FKIA…GCIV, VTEA…LVLL, LNRL…VYPF, LPQL…FAAT, VGHV…WPIV, LMIG…GWYL, YWFY…QFLI, and CFAA…GILL.

Belongs to the UbiA prenyltransferase family. It depends on Mg(2+) as a cofactor.

The protein localises to the cell inner membrane. It catalyses the reaction all-trans-octaprenyl diphosphate + 4-hydroxybenzoate = 4-hydroxy-3-(all-trans-octaprenyl)benzoate + diphosphate. The protein operates within cofactor biosynthesis; ubiquinone biosynthesis. Catalyzes the prenylation of para-hydroxybenzoate (PHB) with an all-trans polyprenyl group. Mediates the second step in the final reaction sequence of ubiquinone-8 (UQ-8) biosynthesis, which is the condensation of the polyisoprenoid side chain with PHB, generating the first membrane-bound Q intermediate 3-octaprenyl-4-hydroxybenzoate. This Coxiella burnetii (strain RSA 331 / Henzerling II) protein is 4-hydroxybenzoate octaprenyltransferase.